The primary structure comprises 130 residues: Large ribosomal subunit protein bL19 (130 aa).

This sequence belongs to the bacterial ribosomal protein bL19 family.

This protein is located at the 30S-50S ribosomal subunit interface and may play a role in the structure and function of the aminoacyl-tRNA binding site. The chain is Large ribosomal subunit protein bL19 from Parvibaculum lavamentivorans (strain DS-1 / DSM 13023 / NCIMB 13966).